We begin with the raw amino-acid sequence, 375 residues long: Queuine tRNA-ribosyltransferase (375 aa).

Asp89 (proton acceptor) is an active-site residue. Residues 89 to 93 (DSGGF), Asp143, Gln187, and Gly214 contribute to the substrate site. The segment at 245 to 251 (GVGKPED) is RNA binding. The active-site Nucleophile is the Asp264. The segment at 269 to 273 (TRNAR) is RNA binding; important for wobble base 34 recognition. 4 residues coordinate Zn(2+): Cys302, Cys304, Cys307, and His333.

It belongs to the queuine tRNA-ribosyltransferase family. As to quaternary structure, homodimer. Within each dimer, one monomer is responsible for RNA recognition and catalysis, while the other monomer binds to the replacement base PreQ1. Requires Zn(2+) as cofactor.

The catalysed reaction is 7-aminomethyl-7-carbaguanine + guanosine(34) in tRNA = 7-aminomethyl-7-carbaguanosine(34) in tRNA + guanine. Its pathway is tRNA modification; tRNA-queuosine biosynthesis. Catalyzes the base-exchange of a guanine (G) residue with the queuine precursor 7-aminomethyl-7-deazaguanine (PreQ1) at position 34 (anticodon wobble position) in tRNAs with GU(N) anticodons (tRNA-Asp, -Asn, -His and -Tyr). Catalysis occurs through a double-displacement mechanism. The nucleophile active site attacks the C1' of nucleotide 34 to detach the guanine base from the RNA, forming a covalent enzyme-RNA intermediate. The proton acceptor active site deprotonates the incoming PreQ1, allowing a nucleophilic attack on the C1' of the ribose to form the product. After dissociation, two additional enzymatic reactions on the tRNA convert PreQ1 to queuine (Q), resulting in the hypermodified nucleoside queuosine (7-(((4,5-cis-dihydroxy-2-cyclopenten-1-yl)amino)methyl)-7-deazaguanosine). The polypeptide is Queuine tRNA-ribosyltransferase (Salmonella typhi).